We begin with the raw amino-acid sequence, 191 residues long: Transcription factor E (191 aa).

In terms of domain architecture, HTH TFE/IIEalpha-type spans 4–87; the sequence is RNKELLEIGR…YWHIETKRLP (84 aa). A disordered region spans residues 170–191; the sequence is APPKKEKKGKKSKKRSKKSKKK. Residues 174-191 show a composition bias toward basic residues; the sequence is KEKKGKKSKKRSKKSKKK.

Belongs to the TFE family. Monomer. Interaction with RNA polymerase subunits RpoF and RpoE is necessary for Tfe stimulatory transcription activity. Able to interact with Tbp and RNA polymerase in the absence of DNA promoter. Interacts both with the preinitiation and elongation complexes.

Transcription factor that plays a role in the activation of archaeal genes transcribed by RNA polymerase. Facilitates transcription initiation by enhancing TATA-box recognition by TATA-box-binding protein (Tbp), and transcription factor B (Tfb) and RNA polymerase recruitment. Not absolutely required for transcription in vitro, but particularly important in cases where Tbp or Tfb function is not optimal. It dynamically alters the nucleic acid-binding properties of RNA polymerases by stabilizing the initiation complex and destabilizing elongation complexes. Seems to translocate with the RNA polymerase following initiation and acts by binding to the non template strand of the transcription bubble in elongation complexes. This Pyrococcus horikoshii (strain ATCC 700860 / DSM 12428 / JCM 9974 / NBRC 100139 / OT-3) protein is Transcription factor E.